The chain runs to 385 residues: Protein pelota homolog (385 aa).

K162 is covalently cross-linked (Glycyl lysine isopeptide (Lys-Gly) (interchain with G-Cter in SUMO2)). Phosphoserine occurs at positions 374, 380, 381, and 382.

The protein belongs to the eukaryotic release factor 1 family. Pelota subfamily. As to quaternary structure, component of the Pelota-HBS1L complex, also named Dom34-Hbs1 complex, composed of PELO and HBS1L. Interacts with PINK1. Interacts with ABCE1. Interacts with CNOT4. The cofactor is a divalent metal cation. In terms of tissue distribution, ubiquitously expressed.

Its subcellular location is the cytoplasm. In terms of biological role, component of the Pelota-HBS1L complex, a complex that recognizes stalled ribosomes and triggers the No-Go Decay (NGD) pathway. In the Pelota-HBS1L complex, PELO recognizes ribosomes stalled at the 3' end of an mRNA and engages stalled ribosomes by destabilizing mRNA in the mRNA channel. Following mRNA extraction from stalled ribosomes by the SKI complex, the Pelota-HBS1L complex promotes recruitment of ABCE1, which drives the disassembly of stalled ribosomes, followed by degradation of damaged mRNAs as part of the NGD pathway. As part of the PINK1-regulated signaling, upon mitochondrial damage is recruited to the ribosome/mRNA-ribonucleoprotein complex associated to mitochondrial outer membrane thereby enabling the recruitment of autophagy receptors and induction of mitophagy. This is Protein pelota homolog from Homo sapiens (Human).